Consider the following 200-residue polypeptide: Superoxide dismutase [Mn] 2 (200 aa).

The Mn(2+) site is built by H28, H76, D158, and H162.

This sequence belongs to the iron/manganese superoxide dismutase family. It depends on Mn(2+) as a cofactor.

The catalysed reaction is 2 superoxide + 2 H(+) = H2O2 + O2. In terms of biological role, destroys superoxide anion radicals which are normally produced within the cells and which are toxic to biological systems. The protein is Superoxide dismutase [Mn] 2 (sod2) of Halobacterium salinarum (strain ATCC 700922 / JCM 11081 / NRC-1) (Halobacterium halobium).